The sequence spans 219 residues: Glutathione S-transferase F13 (219 aa).

The 81-residue stretch at 2–82 folds into the GST N-terminal domain; the sequence is AMKLYGDEMS…YIAEKHRDKG (81 aa). Glutathione contacts are provided by residues 11–12, 40–41, 53–54, and 66–67; these read SA, HK, KV, and ES. Residues 90-217 form the GST C-terminal domain; it reads DPKEAAIVKL…VSPGLTVAPT (128 aa).

The protein belongs to the GST superfamily. Phi family.

The protein localises to the cytoplasm. Its subcellular location is the cytosol. It carries out the reaction RX + glutathione = an S-substituted glutathione + a halide anion + H(+). Functionally, may be involved in the conjugation of reduced glutathione to a wide number of exogenous and endogenous hydrophobic electrophiles and have a detoxification role against certain herbicides. In Arabidopsis thaliana (Mouse-ear cress), this protein is Glutathione S-transferase F13 (GSTF13).